Reading from the N-terminus, the 78-residue chain is Small ribosomal subunit protein bS21A (78 aa).

Residues M30–R52 are compositionally biased toward basic and acidic residues. Positions M30 to R78 are disordered. Residues R53–L62 are compositionally biased toward basic residues.

The protein belongs to the bacterial ribosomal protein bS21 family.

This is Small ribosomal subunit protein bS21A from Rhizobium etli (strain ATCC 51251 / DSM 11541 / JCM 21823 / NBRC 15573 / CFN 42).